The sequence spans 486 residues: Glutamyl-tRNA(Gln) amidotransferase subunit A (486 aa).

Residues Lys75 and Ser150 each act as charge relay system in the active site. Catalysis depends on Ser174, which acts as the Acyl-ester intermediate.

Belongs to the amidase family. GatA subfamily. In terms of assembly, heterotrimer of A, B and C subunits.

The catalysed reaction is L-glutamyl-tRNA(Gln) + L-glutamine + ATP + H2O = L-glutaminyl-tRNA(Gln) + L-glutamate + ADP + phosphate + H(+). Its function is as follows. Allows the formation of correctly charged Gln-tRNA(Gln) through the transamidation of misacylated Glu-tRNA(Gln) in organisms which lack glutaminyl-tRNA synthetase. The reaction takes place in the presence of glutamine and ATP through an activated gamma-phospho-Glu-tRNA(Gln). This Nostoc punctiforme (strain ATCC 29133 / PCC 73102) protein is Glutamyl-tRNA(Gln) amidotransferase subunit A.